Here is a 382-residue protein sequence, read N- to C-terminus: Acetylserotonin O-methyltransferase (382 aa).

Residues Gly218, Asp241, Asp261, Met262, and Lys275 each coordinate S-adenosyl-L-homocysteine. Catalysis depends on His279, which acts as the Proton acceptor. Catalysis depends on residues Glu308 and Glu347.

It belongs to the class I-like SAM-binding methyltransferase superfamily. Cation-independent O-methyltransferase family.

It is found in the cytoplasm. It carries out the reaction N-acetylserotonin + S-adenosyl-L-methionine = melatonin + S-adenosyl-L-homocysteine + H(+). It functions in the pathway aromatic compound metabolism; melatonin biosynthesis; melatonin from serotonin: step 1/2. Its function is as follows. Methyltransferase which catalyzes the transfer of a methyl group onto N-acetylserotonin, producing melatonin (N-acetyl-5-methoxytryptamine). Does not seem to possess caffeate O-methyltransferase activity. Implicated in melatonin-dependent circadian dynamics of stomatal aperture to minimize night water loss and promote drought tolerance. Prevents seed germination by promoting melatonin biosynthesis. Promotes melatonin-triggered defense responses to the necrotrophic fungus Botrytis cinerea. (Microbial infection) Promotes melatonin-triggered defense responses to the necrotrophic fungus Botrytis cinerea. The polypeptide is Acetylserotonin O-methyltransferase (Arabidopsis thaliana (Mouse-ear cress)).